Reading from the N-terminus, the 1489-residue chain is Calmodulin-regulated spectrin-associated protein 2 (1489 aa).

The 114-residue stretch at 222–335 folds into the Calponin-homology (CH) domain; that stretch reads WKLVPARYRK…FMAELFWWFE (114 aa). The disordered stretch occupies residues 375–415; that stretch reads SSDFPSSGEGATFTQSHHHLPSRYSRPQAHSSASGGIRRSS. The segment covering 405–415 has biased composition (low complexity); the sequence is SSASGGIRRSS. A phosphoserine mark is found at serine 416 and serine 418. Threonine 426 is modified (phosphothreonine). Phosphoserine is present on residues serine 464, serine 598, serine 599, serine 611, and serine 673. Disordered regions lie at residues 611–639 and 668–730; these read SPITDNTEVDTGIHVPSEDIPETMDEDSS and TREA…GSEL. The span at 668-679 shows a compositional bias: polar residues; it reads TREALSPCPSTV. At threonine 678 the chain carries Phosphothreonine. Serine 680 is subject to Phosphoserine. Residues 680 to 699 are compositionally biased toward low complexity; that stretch reads STKSQPGSSASSSSGVKMTS. The segment covering 703–713 has biased composition (basic and acidic residues); sequence QKFRKLNHTDG. The stretch at 756 to 793 forms a coiled coil; sequence LLASEMVHLRMKLEEKRRAIEAQKKKMEAAFTKQRQKM. A disordered region spans residues 812–844; the sequence is LREEAAGAEDEKVYTDRAKEKESQKTDGQRSKS. A Phosphoserine modification is found at serine 862. The stretch at 887-926 forms a coiled coil; that stretch reads EILEYTKSIEKLNSSLHFLQQEMQRLSLQQEMLMQMREQQ. The interval 922 to 1034 is MBD region; it reads MREQQSWVIS…IQTRSFVCFG (113 aa). A disordered region spans residues 925–1017; it reads QQSWVISPPQ…SVDSLPRLRR (93 aa). 2 positions are modified to phosphoserine: serine 931 and serine 936. The segment covering 960 to 989 has biased composition (polar residues); sequence SSDSPRPTHPSPQSSNRKSASFSVKSQRTP. Threonine 997, threonine 1002, and threonine 1004 each carry phosphothreonine. Phosphoserine occurs at positions 1008 and 1019. 3 disordered regions span residues 1032-1078, 1096-1152, and 1191-1349; these read CFGD…PFES, PNED…DKEQ, and KETQ…EYTG. Basic and acidic residues predominate over residues 1039 to 1075; it reads PQLKESKPKEEVKKEELESKGTLEQRGHNPEEKEIKP. The span at 1105–1117 shows a compositional bias: pro residues; it reads TEPPPKPVFPPTA. Composition is skewed to basic and acidic residues over residues 1132-1152 and 1191-1252; these read KPPEKADVPVEKYDGESDKEQ and KETQ…DTVI. Serine 1148 bears the Phosphoserine mark. Residues 1166 to 1238 adopt a coiled-coil conformation; the sequence is KDDQKAENDM…REFIRQEYMR (73 aa). Over residues 1287-1299 the composition is skewed to polar residues; sequence SSLSLASLNTGDN. Residues serine 1313, serine 1319, and serine 1321 each carry the phosphoserine modification. Residues 1334 to 1346 are compositionally biased toward polar residues; that stretch reads NASTTSSVASGTE. A CKK domain is found at 1349 to 1483; it reads GPKLYKEPSA…QTKRPVTPKK (135 aa).

It belongs to the CAMSAP1 family. Interacts with CAMSAP3. Interacts with KATNA1 and KATNB1; leading to regulate the length of CAMSAP2-decorated microtubule stretches. Interacts with a complex formed by AKAP9 and PDE4DIP isoform 13/MMG8/SMYLE, which recruits CAMSAP2 to the Golgi. Interacts with MAPRE1/EB1.

It is found in the cytoplasm. The protein resides in the cytoskeleton. The protein localises to the golgi apparatus. Its subcellular location is the cilium basal body. Key microtubule-organizing protein that specifically binds the minus-end of non-centrosomal microtubules and regulates their dynamics and organization. Specifically recognizes growing microtubule minus-ends and autonomously decorates and stabilizes microtubule lattice formed by microtubule minus-end polymerization. Acts on free microtubule minus-ends that are not capped by microtubule-nucleating proteins or other factors and protects microtubule minus-ends from depolymerization. In addition, it also reduces the velocity of microtubule polymerization. Through the microtubule cytoskeleton, also regulates the organization of cellular organelles including the Golgi and the early endosomes. Essential for the tethering, but not for nucleation of non-centrosomal microtubules at the Golgi: together with Golgi-associated proteins AKAP9 and PDE4DIP, required to tether non-centrosomal minus-end microtubules to the Golgi, an important step for polarized cell movement. Also acts as a regulator of neuronal polarity and development: localizes to non-centrosomal microtubule minus-ends in neurons and stabilizes non-centrosomal microtubules, which is required for neuronal polarity, axon specification and dendritic branch formation. Through the microtubule cytoskeleton, regulates the autophagosome transport. This Homo sapiens (Human) protein is Calmodulin-regulated spectrin-associated protein 2.